Consider the following 422-residue polypeptide: Probable ornithine aminotransferase, mitochondrial (422 aa).

At K273 the chain carries N6-(pyridoxal phosphate)lysine.

This sequence belongs to the class-III pyridoxal-phosphate-dependent aminotransferase family. Requires pyridoxal 5'-phosphate as cofactor.

It localises to the mitochondrion matrix. The enzyme catalyses a 2-oxocarboxylate + L-ornithine = L-glutamate 5-semialdehyde + an L-alpha-amino acid. It participates in amino-acid biosynthesis; L-proline biosynthesis; L-glutamate 5-semialdehyde from L-ornithine: step 1/1. In Caenorhabditis elegans, this protein is Probable ornithine aminotransferase, mitochondrial.